A 220-amino-acid polypeptide reads, in one-letter code: Thiamine-phosphate synthase (220 aa).

Residues 47-51 and Asn78 each bind 4-amino-2-methyl-5-(diphosphooxymethyl)pyrimidine; that span reads QYREK. Mg(2+) is bound by residues Asp79 and Asp98. Ser117 contacts 4-amino-2-methyl-5-(diphosphooxymethyl)pyrimidine. 143–145 is a 2-[(2R,5Z)-2-carboxy-4-methylthiazol-5(2H)-ylidene]ethyl phosphate binding site; that stretch reads TAT. Lys146 contributes to the 4-amino-2-methyl-5-(diphosphooxymethyl)pyrimidine binding site. 2-[(2R,5Z)-2-carboxy-4-methylthiazol-5(2H)-ylidene]ethyl phosphate contacts are provided by residues Gly174 and 194-195; that span reads IS.

The protein belongs to the thiamine-phosphate synthase family. Mg(2+) is required as a cofactor.

It carries out the reaction 2-[(2R,5Z)-2-carboxy-4-methylthiazol-5(2H)-ylidene]ethyl phosphate + 4-amino-2-methyl-5-(diphosphooxymethyl)pyrimidine + 2 H(+) = thiamine phosphate + CO2 + diphosphate. It catalyses the reaction 2-(2-carboxy-4-methylthiazol-5-yl)ethyl phosphate + 4-amino-2-methyl-5-(diphosphooxymethyl)pyrimidine + 2 H(+) = thiamine phosphate + CO2 + diphosphate. The catalysed reaction is 4-methyl-5-(2-phosphooxyethyl)-thiazole + 4-amino-2-methyl-5-(diphosphooxymethyl)pyrimidine + H(+) = thiamine phosphate + diphosphate. It participates in cofactor biosynthesis; thiamine diphosphate biosynthesis; thiamine phosphate from 4-amino-2-methyl-5-diphosphomethylpyrimidine and 4-methyl-5-(2-phosphoethyl)-thiazole: step 1/1. Functionally, condenses 4-methyl-5-(beta-hydroxyethyl)thiazole monophosphate (THZ-P) and 2-methyl-4-amino-5-hydroxymethyl pyrimidine pyrophosphate (HMP-PP) to form thiamine monophosphate (TMP). The sequence is that of Thiamine-phosphate synthase from Methanosarcina barkeri (strain Fusaro / DSM 804).